The following is a 78-amino-acid chain: Large ribosomal subunit protein bL28 (78 aa).

Belongs to the bacterial ribosomal protein bL28 family.

The polypeptide is Large ribosomal subunit protein bL28 (Francisella philomiragia subsp. philomiragia (strain ATCC 25017 / CCUG 19701 / FSC 153 / O#319-036)).